Here is a 262-residue protein sequence, read N- to C-terminus: Small ribosomal subunit protein uS3 (262 aa).

A KH type-2 domain is found at 39–107 (VREFLKKKLK…PVHVNIEEIR (69 aa)). Residues 211–262 (NDAPVVEEPQEERRKRPGRPEGRRREGEGRPAGQRRGAGAGARRGTDAKTGE) are disordered. A compositionally biased stretch (basic and acidic residues) spans 221–239 (EERRKRPGRPEGRRREGEG).

The protein belongs to the universal ribosomal protein uS3 family. In terms of assembly, part of the 30S ribosomal subunit. Forms a tight complex with proteins S10 and S14.

Binds the lower part of the 30S subunit head. Binds mRNA in the 70S ribosome, positioning it for translation. This Ralstonia pickettii (strain 12J) protein is Small ribosomal subunit protein uS3.